The chain runs to 896 residues: Protein translocase subunit SecA (896 aa).

ATP contacts are provided by residues Q87, G105–T109, and D512. Disordered stretches follow at residues R565–S584 and E840–A896. Residues C876, C878, C887, and H888 each coordinate Zn(2+). Residues K882–A896 are compositionally biased toward basic residues.

This sequence belongs to the SecA family. As to quaternary structure, monomer and homodimer. Part of the essential Sec protein translocation apparatus which comprises SecA, SecYEG and auxiliary proteins SecDF-YajC and YidC. Requires Zn(2+) as cofactor.

It is found in the cell inner membrane. The protein localises to the cytoplasm. The enzyme catalyses ATP + H2O + cellular proteinSide 1 = ADP + phosphate + cellular proteinSide 2.. Functionally, part of the Sec protein translocase complex. Interacts with the SecYEG preprotein conducting channel. Has a central role in coupling the hydrolysis of ATP to the transfer of proteins into and across the cell membrane, serving both as a receptor for the preprotein-SecB complex and as an ATP-driven molecular motor driving the stepwise translocation of polypeptide chains across the membrane. This Mannheimia succiniciproducens (strain KCTC 0769BP / MBEL55E) protein is Protein translocase subunit SecA.